Here is a 488-residue protein sequence, read N- to C-terminus: Ribulose bisphosphate carboxylase large chain (488 aa).

Substrate is bound by residues asparagine 128 and threonine 178. The active-site Proton acceptor is lysine 180. Lysine 182 serves as a coordination point for substrate. 3 residues coordinate Mg(2+): lysine 206, aspartate 208, and glutamate 209. An N6-carboxylysine modification is found at lysine 206. Residue histidine 298 is the Proton acceptor of the active site. Substrate contacts are provided by arginine 299, histidine 331, and serine 383.

Belongs to the RuBisCO large chain family. Type I subfamily. As to quaternary structure, heterohexadecamer of 8 large chains and 8 small chains. Mg(2+) is required as a cofactor.

It catalyses the reaction 2 (2R)-3-phosphoglycerate + 2 H(+) = D-ribulose 1,5-bisphosphate + CO2 + H2O. The catalysed reaction is D-ribulose 1,5-bisphosphate + O2 = 2-phosphoglycolate + (2R)-3-phosphoglycerate + 2 H(+). In terms of biological role, ruBisCO catalyzes two reactions: the carboxylation of D-ribulose 1,5-bisphosphate, the primary event in carbon dioxide fixation, as well as the oxidative fragmentation of the pentose substrate. Both reactions occur simultaneously and in competition at the same active site. The sequence is that of Ribulose bisphosphate carboxylase large chain from Xanthobacter flavus.